The primary structure comprises 615 residues: (+)-alpha-pinene synthase TPS2, chloroplastic (615 aa).

The N-terminal 55 residues, 1 to 55 (MHCMAVRHFAPSSSLSIFSSTNINNHFFGREIFTPKTSNITTKKSRSRPNCNPIQ), are a transit peptide targeting the chloroplast. 5 residues coordinate (2E)-geranyl diphosphate: R330, D367, D371, R509, and D512. Residues D367 and D371 each coordinate Mg(2+). A DDXXD motif motif is present at residues 367 to 371 (DDIYD). Positions 512, 516, and 520 each coordinate Mg(2+).

Belongs to the terpene synthase family. Tpsb subfamily. Mg(2+) serves as cofactor. The cofactor is Mn(2+). It depends on K(+) as a cofactor. In terms of tissue distribution, trichome.

The protein resides in the plastid. It localises to the chloroplast. It catalyses the reaction (2E)-geranyl diphosphate = (1R,5R)-alpha-pinene + diphosphate. It carries out the reaction (2E)-geranyl diphosphate = (1R,5R)-beta-pinene + diphosphate. The catalysed reaction is (2E)-geranyl diphosphate = (4S)-limonene + diphosphate. The enzyme catalyses (2E)-geranyl diphosphate = beta-myrcene + diphosphate. The protein operates within secondary metabolite biosynthesis; terpenoid biosynthesis. It participates in terpene metabolism; (-)-alpha-pinene biosynthesis; (-)-alpha-pinene from geranyl diphosphate: step 1/1. In terms of biological role, involved in monoterpene (C10) olefins biosynthesis, constituants of cannabinoids and terpenoids-rich resins. Catalyzes mainly the conversion of (2E)-geranyl diphosphate to (+)-alpha-pinene, and also produces minor products such as (-)-limonene, (+)-beta-pinene and beta-myrcene. This chain is (+)-alpha-pinene synthase TPS2, chloroplastic, found in Cannabis sativa (Hemp).